The following is a 308-amino-acid chain: Ribosomal RNA large subunit methyltransferase F (308 aa).

It belongs to the methyltransferase superfamily. METTL16/RlmF family.

The protein resides in the cytoplasm. It carries out the reaction adenosine(1618) in 23S rRNA + S-adenosyl-L-methionine = N(6)-methyladenosine(1618) in 23S rRNA + S-adenosyl-L-homocysteine + H(+). In terms of biological role, specifically methylates the adenine in position 1618 of 23S rRNA. The polypeptide is Ribosomal RNA large subunit methyltransferase F (Shigella dysenteriae serotype 1 (strain Sd197)).